Reading from the N-terminus, the 812-residue chain is G patch domain-containing protein 1 homolog (812 aa).

Residues 1–42 (MNRKKLAAYGQEFEDDDEEGSSVSKKPTQIHEEIATDEKGKR) form a disordered region. Over residues 29–40 (QIHEEIATDEKG) the composition is skewed to basic and acidic residues. Residues 145-191 (SNSIGVRMLRSMGWREGRGIGLANVKQKQKRGGESSEAQFDREQASK) form the G-patch domain. Disordered regions lie at residues 384 to 416 (ANEVEKRDNERGGGEAEEDRDRRQRNRIEFPDE) and 584 to 812 (NEIE…EEKK). A compositionally biased stretch (basic and acidic residues) spans 586–609 (IEMRERLLKSRAQRGAEEKKRNQS). 2 stretches are compositionally biased toward acidic residues: residues 610-630 (DDDDEKEYDDKDSDEEEENEA) and 653-668 (DGADSDESNSEDEEAE). The segment covering 669-720 (EKERQEILKKREEDLKRRREIVEKKEEENRKRVEKELKELENRDLLRVSKQQ) has biased composition (basic and acidic residues). Basic residues predominate over residues 761 to 794 (MKKKKKDKKEKEKKKKSKKSKKSKKEKKTKRKHS). The segment covering 800 to 812 (DSGDNSDGWEEKK) has biased composition (acidic residues).

It belongs to the GPATCH1 family.

The polypeptide is G patch domain-containing protein 1 homolog (Caenorhabditis elegans).